The chain runs to 404 residues: NADH-quinone oxidoreductase subunit D 2 (404 aa).

Belongs to the complex I 49 kDa subunit family. NDH-1 is composed of 14 different subunits. Subunits NuoB, C, D, E, F, and G constitute the peripheral sector of the complex.

It is found in the cell inner membrane. The catalysed reaction is a quinone + NADH + 5 H(+)(in) = a quinol + NAD(+) + 4 H(+)(out). In terms of biological role, NDH-1 shuttles electrons from NADH, via FMN and iron-sulfur (Fe-S) centers, to quinones in the respiratory chain. The immediate electron acceptor for the enzyme in this species is believed to be ubiquinone. Couples the redox reaction to proton translocation (for every two electrons transferred, four hydrogen ions are translocated across the cytoplasmic membrane), and thus conserves the redox energy in a proton gradient. In Sinorhizobium medicae (strain WSM419) (Ensifer medicae), this protein is NADH-quinone oxidoreductase subunit D 2.